The chain runs to 247 residues: Potassium channel Ftrac_2467 (247 aa).

Transmembrane regions (helical) follow at residues 23-44 (TRIE…VLSS), 56-78 (SMRD…YQHY), 89-117 (KVTI…RFLS), 142-165 (LKLL…LMYW), 187-210 (SIIA…IDPW), and 215-237 (TTIL…GRIT). A RxxxFSD motif motif is present at residues 24–30 (RIETFSD).

This sequence belongs to the TMEM175 family. In terms of assembly, homotetramer.

It is found in the cell membrane. It carries out the reaction K(+)(in) = K(+)(out). In terms of biological role, potassium channel; forms a potassium-permeable leak-like channel with weak selectivity for potassium. The channel is permeable for K(+), Rb(+) and Cs(+). In Marivirga tractuosa (strain ATCC 23168 / DSM 4126 / NBRC 15989 / NCIMB 1408 / VKM B-1430 / H-43) (Microscilla tractuosa), this protein is Potassium channel Ftrac_2467.